The sequence spans 220 residues: Deoxyribose-phosphate aldolase (220 aa).

The active-site Proton donor/acceptor is the Asp92. The active-site Schiff-base intermediate with acetaldehyde is Lys155. The active-site Proton donor/acceptor is Lys184.

It belongs to the DeoC/FbaB aldolase family. DeoC type 1 subfamily.

It localises to the cytoplasm. The catalysed reaction is 2-deoxy-D-ribose 5-phosphate = D-glyceraldehyde 3-phosphate + acetaldehyde. It participates in carbohydrate degradation; 2-deoxy-D-ribose 1-phosphate degradation; D-glyceraldehyde 3-phosphate and acetaldehyde from 2-deoxy-alpha-D-ribose 1-phosphate: step 2/2. Its function is as follows. Catalyzes a reversible aldol reaction between acetaldehyde and D-glyceraldehyde 3-phosphate to generate 2-deoxy-D-ribose 5-phosphate. This is Deoxyribose-phosphate aldolase from Symbiobacterium thermophilum (strain DSM 24528 / JCM 14929 / IAM 14863 / T).